A 228-amino-acid chain; its full sequence is uncharacterized protein (228 aa).

One can recognise an ABC transporter domain in the interval 7–228 (VEVHHLKKSV…LVNGQLQEEA (222 aa)). 43-50 (GESGSGKS) contacts ATP.

The protein belongs to the ABC transporter superfamily.

This is an uncharacterized protein from Escherichia coli O157:H7.